Consider the following 1031-residue polypeptide: Pre-mRNA-splicing factor SYF1 (1031 aa).

4 HAT repeats span residues H28–E60, D90–S122, K214–I248, and G250–T269. The interval V346–P368 is disordered. Over residues E353–P368 the composition is skewed to low complexity. 8 HAT repeats span residues G452–T487, P610–R646, P664–S698, G700–E732, K734–K768, K773–E807, F845–K879, and G881–E915. Disordered stretches follow at residues A948–A969 and T1003–F1031.

It belongs to the crooked-neck family. As to quaternary structure, associated with the spliceosome.

The protein resides in the nucleus. Its function is as follows. Involved in pre-mRNA splicing and cell cycle progression. The protein is Pre-mRNA-splicing factor SYF1 (SYF1) of Cryptococcus neoformans var. neoformans serotype D (strain B-3501A) (Filobasidiella neoformans).